We begin with the raw amino-acid sequence, 390 residues long: MNFKRLITTSFTNQIKNMKFKKTISFKPFDINNRIIYDKEPTIVFKDQKSCLLKDTISTTLEDGSKELKIKIGRFTPGLDSNNNYISSDIFEININNYSNKIDLCLNGKNPTFLRRKGKIPTKVKNWEQLLGEQLEIRKSVTLEDGDIISFLGLNGTTSSIQFTIEEDNENEKEKEKEMELDNDNTNTESIPPITSKSTSTSTSLIDTNKIQLKKHFEDPNSKNVGLSALVYFCNKPESFLDVVLYYDDKTVAVLDKYPKAKHHYLVIPRVEINTLDELTPSFIPMLEHMYNVADAIINEIISKDNDDDNLKKSDFKLGFHAIPSMKRLHLHIISNDYNTKYLKNNKHWNSFTTEFYIPFDKILNELKSNGKVKVSIKKKIKKNKKKLIH.

The interval 168 to 201 is disordered; sequence DNENEKEKEKEMELDNDNTNTESIPPITSKSTST. Residues 184-201 are compositionally biased toward low complexity; sequence DNTNTESIPPITSKSTST. One can recognise an HIT domain in the interval 232–343; sequence YFCNKPESFL…ISNDYNTKYL (112 aa).

The polypeptide is HIT domain-containing protein DDB_G0272839 (Dictyostelium discoideum (Social amoeba)).